A 165-amino-acid chain; its full sequence is Cytochrome c-550-like protein (165 aa).

An N-terminal signal peptide occupies residues 1–30 (MLNKSLLIRFVLTILIIVQVIIFDTQPVQA). Heme c contacts are provided by Cys-75, Cys-78, His-79, and Cys-129.

Belongs to the cytochrome c family. PsbV subfamily. Heme c serves as cofactor.

It localises to the cellular thylakoid membrane. Possible low-potential cytochrome c. This Trichodesmium erythraeum (strain IMS101) protein is Cytochrome c-550-like protein (psbV2).